A 264-amino-acid polypeptide reads, in one-letter code: Acyl-[acyl-carrier-protein]--UDP-N-acetylglucosamine O-acyltransferase (264 aa).

The protein belongs to the transferase hexapeptide repeat family. LpxA subfamily. In terms of assembly, homotrimer.

It is found in the cytoplasm. It catalyses the reaction a (3R)-hydroxyacyl-[ACP] + UDP-N-acetyl-alpha-D-glucosamine = a UDP-3-O-[(3R)-3-hydroxyacyl]-N-acetyl-alpha-D-glucosamine + holo-[ACP]. It functions in the pathway glycolipid biosynthesis; lipid IV(A) biosynthesis; lipid IV(A) from (3R)-3-hydroxytetradecanoyl-[acyl-carrier-protein] and UDP-N-acetyl-alpha-D-glucosamine: step 1/6. Involved in the biosynthesis of lipid A, a phosphorylated glycolipid that anchors the lipopolysaccharide to the outer membrane of the cell. This chain is Acyl-[acyl-carrier-protein]--UDP-N-acetylglucosamine O-acyltransferase, found in Rickettsia rickettsii.